The chain runs to 154 residues: Large ribosomal subunit protein uL13 (154 aa).

This sequence belongs to the universal ribosomal protein uL13 family. As to quaternary structure, part of the 50S ribosomal subunit.

In terms of biological role, this protein is one of the early assembly proteins of the 50S ribosomal subunit, although it is not seen to bind rRNA by itself. It is important during the early stages of 50S assembly. The protein is Large ribosomal subunit protein uL13 of Bradyrhizobium sp. (strain BTAi1 / ATCC BAA-1182).